A 158-amino-acid polypeptide reads, in one-letter code: ABA-responsive protein ABR18 (158 aa).

This sequence belongs to the BetVI family.

This chain is ABA-responsive protein ABR18, found in Pisum sativum (Garden pea).